We begin with the raw amino-acid sequence, 207 residues long: Ribosomal RNA small subunit methyltransferase G (207 aa).

S-adenosyl-L-methionine contacts are provided by residues Gly-76, Gln-81, 127–128 (VE), and Arg-141.

Belongs to the methyltransferase superfamily. RNA methyltransferase RsmG family.

Its subcellular location is the cytoplasm. The enzyme catalyses guanosine(527) in 16S rRNA + S-adenosyl-L-methionine = N(7)-methylguanosine(527) in 16S rRNA + S-adenosyl-L-homocysteine. Specifically methylates the N7 position of guanine in position 527 of 16S rRNA. The sequence is that of Ribosomal RNA small subunit methyltransferase G from Neisseria meningitidis serogroup C (strain 053442).